The primary structure comprises 309 residues: Coproporphyrin III ferrochelatase (309 aa).

Fe-coproporphyrin III contacts are provided by residues tyrosine 12, arginine 29, 45–46 (RY), serine 53, and tyrosine 124. Fe(2+) contacts are provided by histidine 182 and glutamate 263.

Belongs to the ferrochelatase family.

Its subcellular location is the cytoplasm. It catalyses the reaction Fe-coproporphyrin III + 2 H(+) = coproporphyrin III + Fe(2+). It functions in the pathway porphyrin-containing compound metabolism; protoheme biosynthesis. In terms of biological role, involved in coproporphyrin-dependent heme b biosynthesis. Catalyzes the insertion of ferrous iron into coproporphyrin III to form Fe-coproporphyrin III. The chain is Coproporphyrin III ferrochelatase from Listeria monocytogenes serotype 4b (strain F2365).